The chain runs to 417 residues: Gamma-glutamyl phosphate reductase (417 aa).

The protein belongs to the gamma-glutamyl phosphate reductase family.

It is found in the cytoplasm. It carries out the reaction L-glutamate 5-semialdehyde + phosphate + NADP(+) = L-glutamyl 5-phosphate + NADPH + H(+). The protein operates within amino-acid biosynthesis; L-proline biosynthesis; L-glutamate 5-semialdehyde from L-glutamate: step 2/2. Catalyzes the NADPH-dependent reduction of L-glutamate 5-phosphate into L-glutamate 5-semialdehyde and phosphate. The product spontaneously undergoes cyclization to form 1-pyrroline-5-carboxylate. The sequence is that of Gamma-glutamyl phosphate reductase from Haemophilus influenzae (strain PittGG).